The chain runs to 142 residues: Glutamate-rich protein 2 (142 aa).

2 disordered regions span residues 1–55 and 104–142; these read MSKN…HAPL and EKAQ…CEDG. Residues 9–27 show a composition bias toward basic and acidic residues; it reads EQEKNNEHCPEDINDKLSE. Positions 28-43 are enriched in acidic residues; sequence STDDDGEDTSDEDKEE. The span at 44-53 shows a compositional bias: basic and acidic residues; that stretch reads DSNPNKDTHA. The segment covering 109–142 has biased composition (acidic residues); sequence LEEDDDESEEDNSESEGESTEDPSEESSDECEDG.

The polypeptide is Glutamate-rich protein 2 (ERICH2) (Bos taurus (Bovine)).